The chain runs to 334 residues: Phospho-N-acetylmuramoyl-pentapeptide-transferase (334 aa).

A run of 9 helical transmembrane segments spans residues 5-25 (VVWLAAGISFLVTLVLGPVTI), 52-72 (PTMGGIMFLIGIAVAGAVLLV), 81-101 (GLVVLAVTLGYGLIGFLDDFI), 116-136 (KILGQLVFATVLAVVAVFKLG), 148-168 (GISFDLGWWPFFFLTLFVLLG), 181-200 (GLASGATVFTATAFAILALV), 230-250 (VFMGDTGSLALGGALGAGAVV), 256-276 (LLVVIGGLYVLETLSVIIQVI), and 309-329 (FWLLSFLFSLVGLLGAQDFWL).

Belongs to the glycosyltransferase 4 family. MraY subfamily. It depends on Mg(2+) as a cofactor.

It localises to the cell membrane. The catalysed reaction is UDP-N-acetyl-alpha-D-muramoyl-L-alanyl-gamma-D-glutamyl-meso-2,6-diaminopimeloyl-D-alanyl-D-alanine + di-trans,octa-cis-undecaprenyl phosphate = di-trans,octa-cis-undecaprenyl diphospho-N-acetyl-alpha-D-muramoyl-L-alanyl-D-glutamyl-meso-2,6-diaminopimeloyl-D-alanyl-D-alanine + UMP. It functions in the pathway cell wall biogenesis; peptidoglycan biosynthesis. Functionally, catalyzes the initial step of the lipid cycle reactions in the biosynthesis of the cell wall peptidoglycan: transfers peptidoglycan precursor phospho-MurNAc-pentapeptide from UDP-MurNAc-pentapeptide onto the lipid carrier undecaprenyl phosphate, yielding undecaprenyl-pyrophosphoryl-MurNAc-pentapeptide, known as lipid I. The sequence is that of Phospho-N-acetylmuramoyl-pentapeptide-transferase from Desulforamulus reducens (strain ATCC BAA-1160 / DSM 100696 / MI-1) (Desulfotomaculum reducens).